A 20-amino-acid chain; its full sequence is Cytochrome P450-RR1 (20 aa).

Belongs to the cytochrome P450 family. Heme is required as a cofactor.

In terms of biological role, P450-RRI catalyzes the O-dealkylation of 2-ethoxyphenol and 2-methoxyphenol to produce catechol. The cytochrome binds other ortho-substituted phenols, including 2-ethoxyphenol, 2-methylphenol and 2-chlorophenol. The chain is Cytochrome P450-RR1 from Rhodococcus rhodochrous.